The following is a 377-amino-acid chain: Actin-related protein T2 (377 aa).

The protein belongs to the actin family.

The protein resides in the cytoplasm. It is found in the cytoskeleton. In Homo sapiens (Human), this protein is Actin-related protein T2 (ACTRT2).